The sequence spans 666 residues: Enzymatic polyprotein (666 aa).

Aspartate 54 is a catalytic residue. Positions 215–445 (ENPIDPIKSK…EKINFLGLEI (231 aa)) constitute a Reverse transcriptase domain.

Belongs to the caulimoviridae enzymatic polyprotein family.

It carries out the reaction DNA(n) + a 2'-deoxyribonucleoside 5'-triphosphate = DNA(n+1) + diphosphate. In terms of biological role, encodes for at least two polypeptides: protease (PR) and reverse transcriptase (RT). The protease processes the polyprotein in cis. Reverse transcriptase is multifunctional enzyme that converts the viral RNA genome into dsDNA in viral cytoplasmic capsids. This enzyme displays a DNA polymerase activity that can copy either DNA or RNA templates, and a ribonuclease H (RNase H) activity that cleaves the RNA strand of RNA-DNA heteroduplexes in a partially processive 3'- to 5'-endonucleasic mode. Neo-synthesized pregenomic RNA (pgRNA) are encapsidated, and reverse-transcribed inside the nucleocapsid. Partial (+)DNA is synthesized from the (-)DNA template and generates the relaxed circular DNA (RC-DNA) genome. After budding and infection, the RC-DNA migrates in the nucleus, and is converted into a plasmid-like covalently closed circular DNA (cccDNA). The polypeptide is Enzymatic polyprotein (Figwort mosaic virus (strain DxS) (FMV)).